A 283-amino-acid polypeptide reads, in one-letter code: Protein FAM78A (283 aa).

It belongs to the FAM78 family.

The polypeptide is Protein FAM78A (Fam78a) (Mus musculus (Mouse)).